A 310-amino-acid chain; its full sequence is HTH-type transcriptional activator TtdR (310 aa).

The HTH lysR-type domain maps to 6–63 (PLAKDLQVLVEIVHSGSFSAAAATLGQTPAFVTKRIQILENTLATTLLNRSARGVALT). Residues 23–42 (FSAAAATLGQTPAFVTKRIQ) constitute a DNA-binding region (H-T-H motif).

It belongs to the LysR transcriptional regulatory family.

Positive regulator required for L-tartrate-dependent anaerobic growth on glycerol. Induces expression of the ttdA-ttdB-ygjE operon. In Escherichia coli O6:K15:H31 (strain 536 / UPEC), this protein is HTH-type transcriptional activator TtdR (ttdR).